The sequence spans 940 residues: UvrABC system protein A (940 aa).

32–39 (GLSGSGKS) lines the ATP pocket. The C4-type zinc finger occupies 252 to 279 (CIDCGISIDEISPRLFSFNSPFGKCDYC). ABC transporter domains follow at residues 309–589 (WANT…EGSL) and 609–937 (SNGK…HYLK). 641 to 648 (GVSGSGKS) serves as a coordination point for ATP. A C4-type zinc finger spans residues 740–766 (CEACKGDGIIKIEMQFLSDVYVPCEIC).

Belongs to the ABC transporter superfamily. UvrA family. Forms a heterotetramer with UvrB during the search for lesions.

It localises to the cytoplasm. The UvrABC repair system catalyzes the recognition and processing of DNA lesions. UvrA is an ATPase and a DNA-binding protein. A damage recognition complex composed of 2 UvrA and 2 UvrB subunits scans DNA for abnormalities. When the presence of a lesion has been verified by UvrB, the UvrA molecules dissociate. The sequence is that of UvrABC system protein A from Clostridium tetani (strain Massachusetts / E88).